We begin with the raw amino-acid sequence, 338 residues long: Ketol-acid reductoisomerase (NADP(+)) (338 aa).

Positions 1–181 (MKVFYDKDAD…GGGRAGIIET (181 aa)) constitute a KARI N-terminal Rossmann domain. NADP(+) is bound by residues 24–27 (YGSQ), Arg-47, and Ser-52. His-107 is a catalytic residue. Gly-133 provides a ligand contact to NADP(+). Residues 182 to 327 (NFREETETDL…EKLRAMMPWI (146 aa)) enclose the KARI C-terminal knotted domain. Mg(2+)-binding residues include Asp-190, Glu-194, Glu-226, and Glu-230. Ser-251 contacts substrate.

The protein belongs to the ketol-acid reductoisomerase family. Mg(2+) is required as a cofactor.

It catalyses the reaction (2R)-2,3-dihydroxy-3-methylbutanoate + NADP(+) = (2S)-2-acetolactate + NADPH + H(+). It carries out the reaction (2R,3R)-2,3-dihydroxy-3-methylpentanoate + NADP(+) = (S)-2-ethyl-2-hydroxy-3-oxobutanoate + NADPH + H(+). It participates in amino-acid biosynthesis; L-isoleucine biosynthesis; L-isoleucine from 2-oxobutanoate: step 2/4. Its pathway is amino-acid biosynthesis; L-valine biosynthesis; L-valine from pyruvate: step 2/4. Its function is as follows. Involved in the biosynthesis of branched-chain amino acids (BCAA). Catalyzes an alkyl-migration followed by a ketol-acid reduction of (S)-2-acetolactate (S2AL) to yield (R)-2,3-dihydroxy-isovalerate. In the isomerase reaction, S2AL is rearranged via a Mg-dependent methyl migration to produce 3-hydroxy-3-methyl-2-ketobutyrate (HMKB). In the reductase reaction, this 2-ketoacid undergoes a metal-dependent reduction by NADPH to yield (R)-2,3-dihydroxy-isovalerate. The polypeptide is Ketol-acid reductoisomerase (NADP(+)) (Cupriavidus pinatubonensis (strain JMP 134 / LMG 1197) (Cupriavidus necator (strain JMP 134))).